A 223-amino-acid polypeptide reads, in one-letter code: Deoxyribose-phosphate aldolase (223 aa).

Residue Asp91 is the Proton donor/acceptor of the active site. Lys154 (schiff-base intermediate with acetaldehyde) is an active-site residue. Catalysis depends on Lys183, which acts as the Proton donor/acceptor.

Belongs to the DeoC/FbaB aldolase family. DeoC type 1 subfamily.

Its subcellular location is the cytoplasm. The enzyme catalyses 2-deoxy-D-ribose 5-phosphate = D-glyceraldehyde 3-phosphate + acetaldehyde. It participates in carbohydrate degradation; 2-deoxy-D-ribose 1-phosphate degradation; D-glyceraldehyde 3-phosphate and acetaldehyde from 2-deoxy-alpha-D-ribose 1-phosphate: step 2/2. In terms of biological role, catalyzes a reversible aldol reaction between acetaldehyde and D-glyceraldehyde 3-phosphate to generate 2-deoxy-D-ribose 5-phosphate. In Geobacillus kaustophilus (strain HTA426), this protein is Deoxyribose-phosphate aldolase.